The sequence spans 105 residues: Large ribosomal subunit protein uL24 (105 aa).

Belongs to the universal ribosomal protein uL24 family. Part of the 50S ribosomal subunit.

In terms of biological role, one of two assembly initiator proteins, it binds directly to the 5'-end of the 23S rRNA, where it nucleates assembly of the 50S subunit. Functionally, one of the proteins that surrounds the polypeptide exit tunnel on the outside of the subunit. This chain is Large ribosomal subunit protein uL24, found in Wolbachia sp. subsp. Brugia malayi (strain TRS).